The primary structure comprises 168 residues: MPRSRTNGNFIDKTFSIVADILLRVIPTTSGEKEAFTYYRDGMSAQSEGNYAEALQNYYEAMRLEIDPYDRSYILYNIGLIHTSNGEHTKALEYYFRALERNPFLPQAFNNMAVICHYRGEQAIQQGDSEIAEAWFDQAAEYWKQAIALTPGNYIEAHNWLKITRRFE.

TPR repeat units lie at residues 35–68 (AFTY…EIDP), 72–105 (SYIL…NPFL), and 120–153 (GEQA…TPGN).

It belongs to the Ycf3 family.

The protein resides in the plastid. Its subcellular location is the chloroplast thylakoid membrane. Essential for the assembly of the photosystem I (PSI) complex. May act as a chaperone-like factor to guide the assembly of the PSI subunits. In Solanum tuberosum (Potato), this protein is Photosystem I assembly protein Ycf3.